A 351-amino-acid chain; its full sequence is Autoinducer 2 import system permease protein LsrC (351 aa).

Transmembrane regions (helical) follow at residues 14 to 34 (LLAI…YFSL), 39 to 59 (MIFS…LVML), 70 to 90 (ITGL…GLAA), 93 to 113 (LFAL…VTWL), 115 to 135 (IPAI…MLLL), 155 to 175 (ILFS…AMAW), 213 to 233 (MNGV…GFIP), 252 to 272 (GISL…AFLL), and 284 to 304 (LPAW…LVFD).

This sequence belongs to the binding-protein-dependent transport system permease family. AraH/RbsC subfamily. As to quaternary structure, the complex is composed of two ATP-binding proteins (LsrA), two transmembrane proteins (LsrC and LsrD) and a solute-binding protein (LsrB).

The protein localises to the cell inner membrane. Its function is as follows. Part of the ABC transporter complex LsrABCD involved in autoinducer 2 (AI-2) import. Probably responsible for the translocation of the substrate across the membrane. The protein is Autoinducer 2 import system permease protein LsrC (lsrC) of Yersinia pseudotuberculosis serotype O:1b (strain IP 31758).